We begin with the raw amino-acid sequence, 305 residues long: UDP-3-O-acyl-N-acetylglucosamine deacetylase (305 aa).

His79, His238, and Asp242 together coordinate Zn(2+). The Proton donor role is filled by His265.

Belongs to the LpxC family. Requires Zn(2+) as cofactor.

The enzyme catalyses a UDP-3-O-[(3R)-3-hydroxyacyl]-N-acetyl-alpha-D-glucosamine + H2O = a UDP-3-O-[(3R)-3-hydroxyacyl]-alpha-D-glucosamine + acetate. The protein operates within glycolipid biosynthesis; lipid IV(A) biosynthesis; lipid IV(A) from (3R)-3-hydroxytetradecanoyl-[acyl-carrier-protein] and UDP-N-acetyl-alpha-D-glucosamine: step 2/6. Its function is as follows. Catalyzes the hydrolysis of UDP-3-O-myristoyl-N-acetylglucosamine to form UDP-3-O-myristoylglucosamine and acetate, the committed step in lipid A biosynthesis. The sequence is that of UDP-3-O-acyl-N-acetylglucosamine deacetylase from Salmonella arizonae (strain ATCC BAA-731 / CDC346-86 / RSK2980).